We begin with the raw amino-acid sequence, 624 residues long: Bifunctional 3'-phosphoadenosine 5'-phosphosulfate synthase 1 (624 aa).

Position 1 is an N-acetylmethionine (methionine 1). Residues 1–225 (MEIPGSLCKK…VVELLQERDI (225 aa)) are adenylyl-sulfate kinase. Lysine 12 is modified (N6-acetyllysine). 62–67 (GAGKTT) contacts ATP. Adenosine 5'-phosphosulfate is bound by residues 89–92 (DNIR), phenylalanine 101, 106–109 (REEN), 132–133 (IS), lysine 171, and 184–185 (GF). ATP-binding positions include cysteine 207, cysteine 212, 419 to 422 (QLRN), 521 to 525 (GRDPA), and alanine 563. A sulfate adenylyltransferase region spans residues 234–624 (VKELYVPENK…TEYYKSLEKA (391 aa)).

The protein in the N-terminal section; belongs to the APS kinase family. This sequence in the C-terminal section; belongs to the sulfate adenylyltransferase family. Homodimer. Expressed in testis, pancreas, kidney, thymus, prostate, ovary, small intestine, colon, leukocytes and liver. Also expressed in high endothelial venules (HEV) cells and in cartilage.

It carries out the reaction sulfate + ATP + H(+) = adenosine 5'-phosphosulfate + diphosphate. The catalysed reaction is adenosine 5'-phosphosulfate + ATP = 3'-phosphoadenylyl sulfate + ADP + H(+). Its pathway is sulfur metabolism; sulfate assimilation. With respect to regulation, inhibited by chlorate. The kinase activity is subject to inhibition by the substrate adenylyl sulfate. Bifunctional enzyme with both ATP sulfurylase and APS kinase activity, which mediates two steps in the sulfate activation pathway. The first step is the transfer of a sulfate group to ATP to yield adenosine 5'-phosphosulfate (APS), and the second step is the transfer of a phosphate group from ATP to APS yielding 3'-phosphoadenylylsulfate (PAPS: activated sulfate donor used by sulfotransferase). In mammals, PAPS is the sole source of sulfate; APS appears to be only an intermediate in the sulfate-activation pathway. Required for normal biosynthesis of sulfated L-selectin ligands in endothelial cells. The chain is Bifunctional 3'-phosphoadenosine 5'-phosphosulfate synthase 1 (PAPSS1) from Homo sapiens (Human).